Here is a 174-residue protein sequence, read N- to C-terminus: Nicotinamide-nucleotide adenylyltransferase (174 aa).

This sequence belongs to the archaeal NMN adenylyltransferase family.

The protein resides in the cytoplasm. It catalyses the reaction beta-nicotinamide D-ribonucleotide + ATP + H(+) = diphosphate + NAD(+). It functions in the pathway cofactor biosynthesis; NAD(+) biosynthesis; NAD(+) from nicotinamide D-ribonucleotide: step 1/1. The sequence is that of Nicotinamide-nucleotide adenylyltransferase from Archaeoglobus fulgidus (strain ATCC 49558 / DSM 4304 / JCM 9628 / NBRC 100126 / VC-16).